Reading from the N-terminus, the 701-residue chain is F-box/LRR-repeat protein 17 (701 aa).

Disordered stretches follow at residues serine 73–alanine 93, glycine 227–proline 250, and valine 279–isoleucine 321. Residues proline 81–arginine 90 show a composition bias toward pro residues. Residues glycine 227–alanine 236 show a composition bias toward gly residues. Over residues alanine 285 to glutamate 294 the composition is skewed to polar residues. Residues isoleucine 318–leucine 365 form the F-box domain.

This sequence belongs to the FBXL17 family. As to quaternary structure, part of the SCF (SKP1-CUL1-F-box) E3 ubiquitin-protein ligase complex SCF(FBXL17) composed of CUL1, SKP1, RBX1 and FBXL17. Interacts with BTB domain-containing proteins such as KLHL12, BCL6 and BACH1; specifically recognizes and binds a conserved degron of non-consecutive residues present at the interface of BTB dimers of aberrant composition. Interacts with SUFU. Interacts with PRMT1.

It is found in the cytoplasm. It localises to the nucleus. In terms of biological role, substrate-recognition component of the SCF(FBXL17) E3 ubiquitin ligase complex, a key component of a quality control pathway required to ensure functional dimerization of BTB domain-containing proteins (dimerization quality control, DQC). FBXL17 specifically recognizes and binds a conserved degron of non-consecutive residues present at the interface of BTB dimers of aberrant composition: aberrant BTB dimer are then ubiquitinated by the SCF(FBXL17) complex and degraded by the proteasome. The ability of the SCF(FBXL17) complex to eliminate compromised BTB dimers is required for the differentiation and survival of neural crest and neuronal cells. The SCF(FBXL17) complex mediates ubiquitination and degradation of BACH1. The SCF(FBXL17) complex is also involved in the regulation of the hedgehog/smoothened (Hh) signaling pathway by mediating the ubiquitination and degradation of SUFU, allowing the release of GLI1 from SUFU for proper Hh signal transduction. The SCF(FBXL17) complex mediates ubiquitination and degradation of PRMT1. This chain is F-box/LRR-repeat protein 17, found in Mus musculus (Mouse).